A 434-amino-acid polypeptide reads, in one-letter code: Adenylosuccinate synthetase (434 aa).

Residues 14-20 (GDEGKGK) and 42-44 (GHE) contribute to the GTP site. The active-site Proton acceptor is Asp15. Positions 15 and 42 each coordinate Mg(2+). IMP is bound by residues 15–18 (DEGK), 40–43 (NSGH), Thr133, Arg147, Asn229, Thr244, and Arg308. The Proton donor role is filled by His43. Residue 304–310 (VTTGRVR) participates in substrate binding. Residues Arg310, 336–338 (KLD), and 422–424 (GTG) contribute to the GTP site.

The protein belongs to the adenylosuccinate synthetase family. Homodimer. Mg(2+) is required as a cofactor.

Its subcellular location is the cytoplasm. The enzyme catalyses IMP + L-aspartate + GTP = N(6)-(1,2-dicarboxyethyl)-AMP + GDP + phosphate + 2 H(+). It functions in the pathway purine metabolism; AMP biosynthesis via de novo pathway; AMP from IMP: step 1/2. Its function is as follows. Plays an important role in the salvage pathway for purine nucleotide biosynthesis. Catalyzes the first committed step in the biosynthesis of AMP from IMP. This chain is Adenylosuccinate synthetase, found in Theileria parva (East coast fever infection agent).